Reading from the N-terminus, the 293-residue chain is Elongation factor Ts (293 aa).

The tract at residues Thr-79–Val-82 is involved in Mg(2+) ion dislocation from EF-Tu.

This sequence belongs to the EF-Ts family.

It localises to the cytoplasm. In terms of biological role, associates with the EF-Tu.GDP complex and induces the exchange of GDP to GTP. It remains bound to the aminoacyl-tRNA.EF-Tu.GTP complex up to the GTP hydrolysis stage on the ribosome. This is Elongation factor Ts from Bacillus licheniformis (strain ATCC 14580 / DSM 13 / JCM 2505 / CCUG 7422 / NBRC 12200 / NCIMB 9375 / NCTC 10341 / NRRL NRS-1264 / Gibson 46).